The chain runs to 157 residues: SsrA-binding protein (157 aa).

Belongs to the SmpB family.

It is found in the cytoplasm. Required for rescue of stalled ribosomes mediated by trans-translation. Binds to transfer-messenger RNA (tmRNA), required for stable association of tmRNA with ribosomes. tmRNA and SmpB together mimic tRNA shape, replacing the anticodon stem-loop with SmpB. tmRNA is encoded by the ssrA gene; the 2 termini fold to resemble tRNA(Ala) and it encodes a 'tag peptide', a short internal open reading frame. During trans-translation Ala-aminoacylated tmRNA acts like a tRNA, entering the A-site of stalled ribosomes, displacing the stalled mRNA. The ribosome then switches to translate the ORF on the tmRNA; the nascent peptide is terminated with the 'tag peptide' encoded by the tmRNA and targeted for degradation. The ribosome is freed to recommence translation, which seems to be the essential function of trans-translation. The chain is SsrA-binding protein from Methylobacterium nodulans (strain LMG 21967 / CNCM I-2342 / ORS 2060).